The following is a 143-amino-acid chain: Nucleoside diphosphate kinase (143 aa).

6 residues coordinate ATP: Lys-11, Phe-59, Arg-87, Thr-93, Arg-104, and Asn-114. The active-site Pros-phosphohistidine intermediate is His-117.

This sequence belongs to the NDK family. As to quaternary structure, homotetramer. Mg(2+) is required as a cofactor.

It localises to the cytoplasm. It carries out the reaction a 2'-deoxyribonucleoside 5'-diphosphate + ATP = a 2'-deoxyribonucleoside 5'-triphosphate + ADP. It catalyses the reaction a ribonucleoside 5'-diphosphate + ATP = a ribonucleoside 5'-triphosphate + ADP. In terms of biological role, major role in the synthesis of nucleoside triphosphates other than ATP. The ATP gamma phosphate is transferred to the NDP beta phosphate via a ping-pong mechanism, using a phosphorylated active-site intermediate. The chain is Nucleoside diphosphate kinase from Alteromonas mediterranea (strain DSM 17117 / CIP 110805 / LMG 28347 / Deep ecotype).